The following is a 99-amino-acid chain: Cell division topological specificity factor (99 aa).

It belongs to the MinE family.

Its function is as follows. Prevents the cell division inhibition by proteins MinC and MinD at internal division sites while permitting inhibition at polar sites. This ensures cell division at the proper site by restricting the formation of a division septum at the midpoint of the long axis of the cell. The sequence is that of Cell division topological specificity factor from Tolumonas auensis (strain DSM 9187 / NBRC 110442 / TA 4).